A 548-amino-acid chain; its full sequence is Probable 2,3-bisphosphoglycerate-independent phosphoglycerate mutase (548 aa).

2 residues coordinate Mn(2+): Asp-20 and Ser-73. The active-site Phosphoserine intermediate is Ser-73. Residues His-134, 164–165 (RD), Arg-200, Arg-207, 279–282 (RGDR), and Lys-354 each bind substrate. 5 residues coordinate Mn(2+): Asp-422, His-426, Asp-463, His-464, and His-493.

Belongs to the BPG-independent phosphoglycerate mutase family. Monomer. Mn(2+) serves as cofactor.

It carries out the reaction (2R)-2-phosphoglycerate = (2R)-3-phosphoglycerate. It functions in the pathway carbohydrate degradation; glycolysis; pyruvate from D-glyceraldehyde 3-phosphate: step 3/5. In terms of biological role, catalyzes the interconversion of 2-phosphoglycerate and 3-phosphoglycerate. In Leptospira interrogans serogroup Icterohaemorrhagiae serovar Lai (strain 56601), this protein is Probable 2,3-bisphosphoglycerate-independent phosphoglycerate mutase (gpmI).